Here is a 474-residue protein sequence, read N- to C-terminus: Proline--tRNA ligase (474 aa).

This sequence belongs to the class-II aminoacyl-tRNA synthetase family. ProS type 3 subfamily. In terms of assembly, homodimer.

The protein resides in the cytoplasm. It catalyses the reaction tRNA(Pro) + L-proline + ATP = L-prolyl-tRNA(Pro) + AMP + diphosphate. In terms of biological role, catalyzes the attachment of proline to tRNA(Pro) in a two-step reaction: proline is first activated by ATP to form Pro-AMP and then transferred to the acceptor end of tRNA(Pro). The sequence is that of Proline--tRNA ligase from Mycoplasma mycoides subsp. mycoides SC (strain CCUG 32753 / NCTC 10114 / PG1).